Here is a 577-residue protein sequence, read N- to C-terminus: Arginine--tRNA ligase (577 aa).

Residues 122 to 132 (PNVAKEMHVGH) carry the 'HIGH' region motif.

It belongs to the class-I aminoacyl-tRNA synthetase family. In terms of assembly, monomer.

The protein localises to the cytoplasm. The catalysed reaction is tRNA(Arg) + L-arginine + ATP = L-arginyl-tRNA(Arg) + AMP + diphosphate. The chain is Arginine--tRNA ligase from Salmonella paratyphi A (strain ATCC 9150 / SARB42).